The chain runs to 607 residues: Elongation factor 4 (607 aa).

The 183-residue stretch at 11–193 (ENIRNFSIIA…KIVEVVPAPD (183 aa)) folds into the tr-type G domain. Residues 23-28 (DHGKST) and 140-143 (NKID) contribute to the GTP site.

Belongs to the TRAFAC class translation factor GTPase superfamily. Classic translation factor GTPase family. LepA subfamily.

It localises to the cell membrane. It carries out the reaction GTP + H2O = GDP + phosphate + H(+). In terms of biological role, required for accurate and efficient protein synthesis under certain stress conditions. May act as a fidelity factor of the translation reaction, by catalyzing a one-codon backward translocation of tRNAs on improperly translocated ribosomes. Back-translocation proceeds from a post-translocation (POST) complex to a pre-translocation (PRE) complex, thus giving elongation factor G a second chance to translocate the tRNAs correctly. Binds to ribosomes in a GTP-dependent manner. The protein is Elongation factor 4 of Staphylococcus aureus (strain N315).